A 74-amino-acid chain; its full sequence is Class I heat shock protein (74 aa).

The segment at isoleucine 1–histidine 20 is disordered. Residues isoleucine 1 to glycine 74 enclose the sHSP domain. Over residues arginine 8–histidine 20 the composition is skewed to basic and acidic residues.

This sequence belongs to the small heat shock protein (HSP20) family. As to quaternary structure, forms oligomeric structures.

The protein resides in the cytoplasm. This Glycine max (Soybean) protein is Class I heat shock protein (HSP6834-A).